Consider the following 430-residue polypeptide: Pre-B-cell leukemia transcription factor 1 (430 aa).

Residues 1-40 (MDEQPRLMHSHAGVGMAGHPGLSQHLQDGAGGTEGEGGRK) are disordered. The PBC domain maps to 38-232 (GRKQDIGDIL…VMILRSRFLD (195 aa)). The PBC-A stretch occupies residues 45–124 (DILQQIMTIT…EGVAGPEKGG (80 aa)). Residues 127–232 (AAAAAAAAAS…VMILRSRFLD (106 aa)) are PBC-B. Residues 233 to 295 (ARRKRRNFNK…NKRIRYKKNI (63 aa)) constitute a DNA-binding region (homeobox; TALE-type). 2 disordered regions span residues 317–338 (SAHGSQANSPSTPNSAGSSSSF) and 395–430 (SPQGISANGGWQDATTPSSVTSPTEGPGSVHSDTSN). The span at 323 to 338 (ANSPSTPNSAGSSSSF) shows a compositional bias: low complexity. A compositionally biased stretch (polar residues) spans 407 to 418 (DATTPSSVTSPT).

The protein belongs to the TALE/PBX homeobox family. In terms of assembly, forms a heterodimer with MEIS1 which binds DNA. The PBX1-MEIS1 heterodimer binds a cAMP-responsive sequence in CYP17. It also binds a consensus region in the SOX3 promoter. PBX1 forms heterotrimers with MEIS1 and a number of HOX proteins including HOXA9, HOXD4, HOXD9 and HOXD10. Forms heterodimers with HOXA1, HOXA5, HOXB7 and HOXB8 which bind the 5'-TGATTGAT-3' consensus sequence. Also forms heterodimers with HOXA5, HOXB7, HOXB8, HOXC8 and HOXD4 which bind the 5'-ATCAATCAA-3' consensus sequence. Interacts with PBXIP1. Interacts with TLX1. Interacts with FOXC1. Interacts with MN1. Interacts with MEIS2 isoform 4, SP1, SP3 and KLF4. As to quaternary structure, part of a PDX1:PBX1b:MEIS2B complex; PBX1b recruits MEIS2B to the complex. Expressed in the kidney. Expressed in the endothelial cells of the glomeruli and interstitium (at protein level). Expressed in all tissues except in cells of the B and T lineage. Expressed strongly in kidney and brain.

It localises to the nucleus. Its function is as follows. Transcription factor which binds the DNA sequence 5'-TGATTGAT-3' as part of a heterodimer with HOX proteins such as HOXA1, HOXA5, HOXB7 and HOXB8. Binds to the DNA sequence 5'-TGATTGAC-3' in complex with a nuclear factor which is not a class I HOX protein. Has also been shown to bind the DNA sequence 5'-ATCAATCAA-3' cooperatively with HOXA5, HOXB7, HOXB8, HOXC8 and HOXD4. Acts as a transcriptional activator of PF4 in complex with MEIS1. Also activates transcription of SOX3 in complex with MEIS1 by binding to the 5'-TGATTGAC-3' consensus sequence. In natural killer cells, binds to the NFIL3 promoter and acts as a transcriptional activator of NFIL3, promoting natural killer cell development. Plays a role in the cAMP-dependent regulation of CYP17A1 gene expression via its cAMP-regulatory sequence (CRS1). Probably in complex with MEIS2, involved in transcriptional regulation by KLF4. Acts as a transcriptional activator of NKX2-5 and a transcriptional repressor of CDKN2B. Together with NKX2-5, required for spleen development through a mechanism that involves CDKN2B repression. Functionally, as part of a PDX1:PBX1b:MEIS2B complex in pancreatic acinar cells, is involved in the transcriptional activation of the ELA1 enhancer; the complex binds to the enhancer B element and cooperates with the transcription factor 1 complex (PTF1) bound to the enhancer A element. The polypeptide is Pre-B-cell leukemia transcription factor 1 (PBX1) (Homo sapiens (Human)).